A 255-amino-acid chain; its full sequence is Alpha-acetolactate decarboxylase (255 aa).

It belongs to the alpha-acetolactate decarboxylase family.

The catalysed reaction is (2S)-2-acetolactate + H(+) = (R)-acetoin + CO2. Its pathway is polyol metabolism; (R,R)-butane-2,3-diol biosynthesis; (R,R)-butane-2,3-diol from pyruvate: step 2/3. In terms of biological role, converts acetolactate into acetoin, which can be excreted by the cells. This may be a mechanism for controlling the internal pH of cells in the stationary stage. In Bacillus subtilis (strain 168), this protein is Alpha-acetolactate decarboxylase (alsD).